The primary structure comprises 166 residues: Endoribonuclease YbeY (166 aa).

3 residues coordinate Zn(2+): His132, His136, and His142.

The protein belongs to the endoribonuclease YbeY family. It depends on Zn(2+) as a cofactor.

The protein localises to the cytoplasm. Functionally, single strand-specific metallo-endoribonuclease involved in late-stage 70S ribosome quality control and in maturation of the 3' terminus of the 16S rRNA. This chain is Endoribonuclease YbeY, found in Clostridium botulinum (strain ATCC 19397 / Type A).